Reading from the N-terminus, the 310-residue chain is Glucan endo-1,3-beta-glucosidase GI (310 aa).

The active-site Proton donor is the Glu96. Glu234 serves as the catalytic Nucleophile.

The protein belongs to the glycosyl hydrolase 17 family. Monomer. In terms of tissue distribution, young leaves and roots.

The catalysed reaction is Hydrolysis of (1-&gt;3)-beta-D-glucosidic linkages in (1-&gt;3)-beta-D-glucans.. In terms of biological role, may provide a degree of protection against microbial invasion of germinated barley grain through its ability to degrade fungal cell wall polysaccharides. Does not hydrolyze (1,3;1,4)-beta-D-glucans, (1,6)-beta-D-glucan, CM-cellulose, insoluble (1,3)-beta-D-glucans or aryl beta-D-glycosides. In Hordeum vulgare (Barley), this protein is Glucan endo-1,3-beta-glucosidase GI.